Reading from the N-terminus, the 286-residue chain is Phosphatidylserine decarboxylase proenzyme (286 aa).

Residues Asp-88, His-145, and Ser-251 each act as charge relay system; for autoendoproteolytic cleavage activity in the active site. Ser-251 serves as the catalytic Schiff-base intermediate with substrate; via pyruvic acid; for decarboxylase activity. Ser-251 carries the pyruvic acid (Ser); by autocatalysis modification.

It belongs to the phosphatidylserine decarboxylase family. PSD-B subfamily. Prokaryotic type I sub-subfamily. In terms of assembly, heterodimer of a large membrane-associated beta subunit and a small pyruvoyl-containing alpha subunit. Pyruvate is required as a cofactor. In terms of processing, is synthesized initially as an inactive proenzyme. Formation of the active enzyme involves a self-maturation process in which the active site pyruvoyl group is generated from an internal serine residue via an autocatalytic post-translational modification. Two non-identical subunits are generated from the proenzyme in this reaction, and the pyruvate is formed at the N-terminus of the alpha chain, which is derived from the carboxyl end of the proenzyme. The autoendoproteolytic cleavage occurs by a canonical serine protease mechanism, in which the side chain hydroxyl group of the serine supplies its oxygen atom to form the C-terminus of the beta chain, while the remainder of the serine residue undergoes an oxidative deamination to produce ammonia and the pyruvoyl prosthetic group on the alpha chain. During this reaction, the Ser that is part of the protease active site of the proenzyme becomes the pyruvoyl prosthetic group, which constitutes an essential element of the active site of the mature decarboxylase.

Its subcellular location is the cell membrane. The enzyme catalyses a 1,2-diacyl-sn-glycero-3-phospho-L-serine + H(+) = a 1,2-diacyl-sn-glycero-3-phosphoethanolamine + CO2. It participates in phospholipid metabolism; phosphatidylethanolamine biosynthesis; phosphatidylethanolamine from CDP-diacylglycerol: step 2/2. Catalyzes the formation of phosphatidylethanolamine (PtdEtn) from phosphatidylserine (PtdSer). The chain is Phosphatidylserine decarboxylase proenzyme from Verminephrobacter eiseniae (strain EF01-2).